We begin with the raw amino-acid sequence, 298 residues long: Chitin deacetylase (298 aa).

Positions 1-16 (MLAPLFAALLAGAATA) are cleaved as a signal peptide. The NodB homology domain occupies 39-222 (NTFALTFDDG…AIKAKGLTPV (184 aa)). Asp46 acts as the Proton acceptor in catalysis. Acetate is bound at residue Asp46. Positions 47, 99, and 103 each coordinate Co(2+). Tyr140 is a binding site for acetate. His196 functions as the Proton donor in the catalytic mechanism. In terms of domain architecture, Chitin-binding type-1 spans 256 to 298 (DDTCGGSNGYVCQNSQCCSQWGWCGTTSEYCAAGCQAAYGPCT). Disulfide bonds link Cys259-Cys273, Cys267-Cys279, Cys272-Cys286, and Cys290-Cys297.

It belongs to the polysaccharide deacetylase family. Requires Co(2+) as cofactor.

Its subcellular location is the secreted. It carries out the reaction [(1-&gt;4)-N-acetyl-beta-D-glucosaminyl](n) + n H2O = chitosan + n acetate. Its activity is regulated as follows. Inhibited by Fe(2+) and to a lesser extent by Mn(2+). Hydrolyzes the N-acetamido groups of N-acetyl-D-glucosamine polymers in chitin to form chitosan and acetate. May play a role in evasion of the host immune response; plant chitinases liberate chitin molecules from the fungal cell wall which act as elicitors of the plant immune response, deacetylation of the liberated chitin neutralizes elicitor activity. This chain is Chitin deacetylase, found in Pestalotiopsis sp.